A 98-amino-acid chain; its full sequence is NADH-ubiquinone oxidoreductase chain 4L (98 aa).

The next 3 membrane-spanning stretches (helical) occupy residues 1–21, 29–49, and 61–81; these read MSLV…GLLM, SLLC…LTIL, and IILL…LVMV.

This sequence belongs to the complex I subunit 4L family. Core subunit of respiratory chain NADH dehydrogenase (Complex I) which is composed of 45 different subunits.

Its subcellular location is the mitochondrion inner membrane. It catalyses the reaction a ubiquinone + NADH + 5 H(+)(in) = a ubiquinol + NAD(+) + 4 H(+)(out). Functionally, core subunit of the mitochondrial membrane respiratory chain NADH dehydrogenase (Complex I) which catalyzes electron transfer from NADH through the respiratory chain, using ubiquinone as an electron acceptor. Part of the enzyme membrane arm which is embedded in the lipid bilayer and involved in proton translocation. In Elaphodus cephalophus (Tufted deer), this protein is NADH-ubiquinone oxidoreductase chain 4L (MT-ND4L).